The chain runs to 194 residues: Fe/S biogenesis protein NfuA (194 aa).

The [4Fe-4S] cluster site is built by Cys-152 and Cys-155.

Belongs to the NfuA family. In terms of assembly, homodimer. It depends on [4Fe-4S] cluster as a cofactor.

In terms of biological role, involved in iron-sulfur cluster biogenesis. Binds a 4Fe-4S cluster, can transfer this cluster to apoproteins, and thereby intervenes in the maturation of Fe/S proteins. Could also act as a scaffold/chaperone for damaged Fe/S proteins. This is Fe/S biogenesis protein NfuA from Stutzerimonas stutzeri (strain A1501) (Pseudomonas stutzeri).